Consider the following 263-residue polypeptide: 5'-nucleotidase SurE (263 aa).

A divalent metal cation-binding residues include Asp8, Asp9, Ser40, and Asn98.

This sequence belongs to the SurE nucleotidase family. Requires a divalent metal cation as cofactor.

The protein resides in the cytoplasm. The enzyme catalyses a ribonucleoside 5'-phosphate + H2O = a ribonucleoside + phosphate. Nucleotidase that shows phosphatase activity on nucleoside 5'-monophosphates. The sequence is that of 5'-nucleotidase SurE from Gloeobacter violaceus (strain ATCC 29082 / PCC 7421).